The primary structure comprises 190 residues: Elongation factor P (190 aa).

N6-(3,6-diaminohexanoyl)-5-hydroxylysine is present on Lys34.

It belongs to the elongation factor P family. In terms of processing, may be beta-lysylated on the epsilon-amino group of Lys-34 by the combined action of EpmA and EpmB, and then hydroxylated on the C5 position of the same residue by EpmC (if this protein is present). Lysylation is critical for the stimulatory effect of EF-P on peptide-bond formation. The lysylation moiety may extend toward the peptidyltransferase center and stabilize the terminal 3-CCA end of the tRNA. Hydroxylation of the C5 position on Lys-34 may allow additional potential stabilizing hydrogen-bond interactions with the P-tRNA.

The protein localises to the cytoplasm. It participates in protein biosynthesis; polypeptide chain elongation. In terms of biological role, involved in peptide bond synthesis. Alleviates ribosome stalling that occurs when 3 or more consecutive Pro residues or the sequence PPG is present in a protein, possibly by augmenting the peptidyl transferase activity of the ribosome. Modification of Lys-34 is required for alleviation. The sequence is that of Elongation factor P from Hahella chejuensis (strain KCTC 2396).